The following is a 354-amino-acid chain: Probable L-ascorbate-6-phosphate lactonase UlaG (354 aa).

The protein belongs to the UlaG family. The cofactor is a divalent metal cation.

It localises to the cytoplasm. It carries out the reaction L-ascorbate 6-phosphate + H2O = 3-dehydro-L-gulonate 6-phosphate. Its pathway is cofactor degradation; L-ascorbate degradation; D-xylulose 5-phosphate from L-ascorbate: step 1/4. Its function is as follows. Probably catalyzes the hydrolysis of L-ascorbate-6-P into 3-keto-L-gulonate-6-P. Is essential for L-ascorbate utilization under anaerobic conditions. The protein is Probable L-ascorbate-6-phosphate lactonase UlaG of Salmonella agona (strain SL483).